A 571-amino-acid polypeptide reads, in one-letter code: uncharacterized protein (571 aa).

Helical transmembrane passes span 10-29 (VRLH…HFIG), 36-55 (VSLG…GLLF), 65-87 (WAFF…FASL), 96-118 (ALAV…LFRF), and 166-188 (ATTY…PRLL). The RCK C-terminal domain maps to 294 to 378 (TEVDDQELLS…IATAARNLGF (85 aa)). 6 helical membrane passes run 388-406 (LVYL…LLQV), 411-433 (VPLG…WLYS), 446-465 (LRLL…GLAA), 480-502 (LFAK…GLLL), 509-531 (LPPI…LNAL), and 546-568 (VPFA…CAVA).

The protein belongs to the AAE transporter (TC 2.A.81) family.

It localises to the cell membrane. This is an uncharacterized protein from Bordetella bronchiseptica (strain ATCC BAA-588 / NCTC 13252 / RB50) (Alcaligenes bronchisepticus).